Reading from the N-terminus, the 382-residue chain is Alanine racemase (382 aa).

Residue Lys39 is the Proton acceptor; specific for D-alanine of the active site. Lys39 bears the N6-(pyridoxal phosphate)lysine mark. Arg138 serves as a coordination point for substrate. The active-site Proton acceptor; specific for L-alanine is the Tyr265. Met312 contacts substrate.

The protein belongs to the alanine racemase family. Pyridoxal 5'-phosphate serves as cofactor.

The enzyme catalyses L-alanine = D-alanine. It participates in amino-acid biosynthesis; D-alanine biosynthesis; D-alanine from L-alanine: step 1/1. Functionally, catalyzes the interconversion of L-alanine and D-alanine. May also act on other amino acids. This Staphylococcus epidermidis (strain ATCC 35984 / DSM 28319 / BCRC 17069 / CCUG 31568 / BM 3577 / RP62A) protein is Alanine racemase (alr).